The chain runs to 206 residues: Small ribosomal subunit protein uS4 (206 aa).

An S4 RNA-binding domain is found at 96-168 (SRLDNVVYRM…LELAEQREKP (73 aa)).

This sequence belongs to the universal ribosomal protein uS4 family. Part of the 30S ribosomal subunit. Contacts protein S5. The interaction surface between S4 and S5 is involved in control of translational fidelity.

Its function is as follows. One of the primary rRNA binding proteins, it binds directly to 16S rRNA where it nucleates assembly of the body of the 30S subunit. Functionally, with S5 and S12 plays an important role in translational accuracy. The chain is Small ribosomal subunit protein uS4 from Baumannia cicadellinicola subsp. Homalodisca coagulata.